A 266-amino-acid polypeptide reads, in one-letter code: Translation initiation factor 2 subunit alpha (266 aa).

In terms of domain architecture, S1 motif spans 12–83; sequence GEILIATVKQ…RKGTVDVSLK (72 aa).

Belongs to the eIF-2-alpha family. In terms of assembly, heterotrimer composed of an alpha, a beta and a gamma chain.

In terms of biological role, eIF-2 functions in the early steps of protein synthesis by forming a ternary complex with GTP and initiator tRNA. This is Translation initiation factor 2 subunit alpha from Saccharolobus islandicus (strain M.16.27) (Sulfolobus islandicus).